The chain runs to 259 residues: Keratin-associated protein 10-8 (259 aa).

The segment at 26–243 (HVSRVSSPST…SCQPSCCHPA (218 aa)) is 19 X 5 AA repeats of C-C-X(3). Tandem repeats lie at residues 50-54 (CCEPR), 60-64 (CCTPS), 65-69 (CCAPA), 98-102 (CCQQS), 108-112 (CCTSS), 118-122 (CCVPV), 123-127 (CCKSN), 133-137 (CCVSI), 145-149 (CCQQS), 155-159 (CCTFS), 165-169 (CCVPI), 170-174 (CCKPI), 175-179 (CCVPV), 187-191 (CCQKS), 197-201 (CCTTS), 202-206 (CCRPS), 221-225 (CCVPV), 228-232 (CCVPA), and 239-243 (CCHPA).

The protein belongs to the KRTAP type 10 family. As to quaternary structure, interacts with hair keratins. Restricted to a narrow region of the hair fiber cuticle, lying approximately 20 cell layers above the apex of the dermal papilla of the hair root; not detected in any other tissues.

In terms of biological role, in the hair cortex, hair keratin intermediate filaments are embedded in an interfilamentous matrix, consisting of hair keratin-associated proteins (KRTAP), which are essential for the formation of a rigid and resistant hair shaft through their extensive disulfide bond cross-linking with abundant cysteine residues of hair keratins. The matrix proteins include the high-sulfur and high-glycine-tyrosine keratins. This Homo sapiens (Human) protein is Keratin-associated protein 10-8 (KRTAP10-8).